A 479-amino-acid polypeptide reads, in one-letter code: Aspartyl/glutamyl-tRNA(Asn/Gln) amidotransferase subunit B (479 aa).

The protein belongs to the GatB/GatE family. GatB subfamily. In terms of assembly, heterotrimer of A, B and C subunits.

The enzyme catalyses L-glutamyl-tRNA(Gln) + L-glutamine + ATP + H2O = L-glutaminyl-tRNA(Gln) + L-glutamate + ADP + phosphate + H(+). It catalyses the reaction L-aspartyl-tRNA(Asn) + L-glutamine + ATP + H2O = L-asparaginyl-tRNA(Asn) + L-glutamate + ADP + phosphate + 2 H(+). Its function is as follows. Allows the formation of correctly charged Asn-tRNA(Asn) or Gln-tRNA(Gln) through the transamidation of misacylated Asp-tRNA(Asn) or Glu-tRNA(Gln) in organisms which lack either or both of asparaginyl-tRNA or glutaminyl-tRNA synthetases. The reaction takes place in the presence of glutamine and ATP through an activated phospho-Asp-tRNA(Asn) or phospho-Glu-tRNA(Gln). The chain is Aspartyl/glutamyl-tRNA(Asn/Gln) amidotransferase subunit B from Mycoplasma capricolum subsp. capricolum (strain California kid / ATCC 27343 / NCTC 10154).